The chain runs to 230 residues: Large ribosomal subunit protein bL25 (230 aa).

It belongs to the bacterial ribosomal protein bL25 family. CTC subfamily. In terms of assembly, part of the 50S ribosomal subunit; part of the 5S rRNA/L5/L18/L25 subcomplex. Contacts the 5S rRNA. Binds to the 5S rRNA independently of L5 and L18.

Functionally, this is one of the proteins that binds to the 5S RNA in the ribosome where it forms part of the central protuberance. This chain is Large ribosomal subunit protein bL25 (rplY), found in Rhodopseudomonas palustris (strain ATCC BAA-98 / CGA009).